An 85-amino-acid chain; its full sequence is Small ribosomal subunit protein bS16 (85 aa).

Belongs to the bacterial ribosomal protein bS16 family.

The sequence is that of Small ribosomal subunit protein bS16 from Nitrosomonas eutropha (strain DSM 101675 / C91 / Nm57).